The chain runs to 175 residues: Large ribosomal subunit protein uL10 (175 aa).

It belongs to the universal ribosomal protein uL10 family. In terms of assembly, part of the ribosomal stalk of the 50S ribosomal subunit. The N-terminus interacts with L11 and the large rRNA to form the base of the stalk. The C-terminus forms an elongated spine to which L12 dimers bind in a sequential fashion forming a multimeric L10(L12)X complex.

Functionally, forms part of the ribosomal stalk, playing a central role in the interaction of the ribosome with GTP-bound translation factors. This is Large ribosomal subunit protein uL10 from Synechococcus sp. (strain CC9311).